The following is a 23-amino-acid chain: Alyteserin-1b (23 aa).

The residue at position 23 (Asn23) is an Asparagine amide.

Expressed by the skin glands.

The protein localises to the secreted. The protein resides in the target cell membrane. In terms of biological role, antibacterial peptide with amphipathic alpha-helical structure. Shows selective growth inhibitory activity against the Gram-negative bacteria E.coli (MIC=25 uM). Has a weak hemolytic activity against human erythrocytes (LC(50)=200 uM). Is not active against S.aureus (MIC=200 uM). The protein is Alyteserin-1b of Alytes obstetricans (Common midwife toad).